Here is a 764-residue protein sequence, read N- to C-terminus: Putative alpha-1,3-mannosyltransferase MNN13 (764 aa).

At 1–13 (MIKPILGTKKIRR) the chain is on the cytoplasmic side. A helical transmembrane segment spans residues 14 to 34 (VICIIIGLFCILLLIGIFKHN). Topologically, residues 35-764 (STNSVNNEAS…YLGDVWVGKY (730 aa)) are lumenal. N-linked (GlcNAc...) asparagine glycosylation is found at N45 and N204.

Belongs to the MNN1/MNT family.

It localises to the golgi apparatus membrane. Its pathway is protein modification; protein glycosylation. In terms of biological role, responsible for addition of the terminal mannose residues to the outer chain of core N-linked polysaccharides and to O-linked mannotriose. Implicated in late Golgi modifications. This chain is Putative alpha-1,3-mannosyltransferase MNN13 (MNN13), found in Candida albicans (strain SC5314 / ATCC MYA-2876) (Yeast).